The sequence spans 635 residues: Biosynthetic arginine decarboxylase (635 aa).

N6-(pyridoxal phosphate)lysine is present on lysine 100. Residue 282-292 (LDIGGGLGVDY) coordinates substrate.

This sequence belongs to the Orn/Lys/Arg decarboxylase class-II family. SpeA subfamily. Mg(2+) is required as a cofactor. Requires pyridoxal 5'-phosphate as cofactor.

It catalyses the reaction L-arginine + H(+) = agmatine + CO2. It functions in the pathway amine and polyamine biosynthesis; agmatine biosynthesis; agmatine from L-arginine: step 1/1. In terms of biological role, catalyzes the biosynthesis of agmatine from arginine. This chain is Biosynthetic arginine decarboxylase, found in Geobacter sp. (strain M21).